A 130-amino-acid chain; its full sequence is Small ribosomal subunit protein uS9 (130 aa).

It belongs to the universal ribosomal protein uS9 family.

The sequence is that of Small ribosomal subunit protein uS9 from Burkholderia thailandensis (strain ATCC 700388 / DSM 13276 / CCUG 48851 / CIP 106301 / E264).